The chain runs to 119 residues: Large ribosomal subunit protein bL20 (119 aa).

Belongs to the bacterial ribosomal protein bL20 family.

Binds directly to 23S ribosomal RNA and is necessary for the in vitro assembly process of the 50S ribosomal subunit. It is not involved in the protein synthesizing functions of that subunit. This is Large ribosomal subunit protein bL20 from Listeria innocua serovar 6a (strain ATCC BAA-680 / CLIP 11262).